A 276-amino-acid polypeptide reads, in one-letter code: NH(3)-dependent NAD(+) synthetase (276 aa).

Residue 43–50 (GISGGVDS) participates in ATP binding. Asp49 provides a ligand contact to Mg(2+). Arg146 lines the deamido-NAD(+) pocket. Thr166 serves as a coordination point for ATP. Position 171 (Glu171) interacts with Mg(2+). Positions 179 and 186 each coordinate deamido-NAD(+). 2 residues coordinate ATP: Lys195 and Thr217. Residue 266-267 (HK) coordinates deamido-NAD(+).

Belongs to the NAD synthetase family. In terms of assembly, homodimer.

The catalysed reaction is deamido-NAD(+) + NH4(+) + ATP = AMP + diphosphate + NAD(+) + H(+). It functions in the pathway cofactor biosynthesis; NAD(+) biosynthesis; NAD(+) from deamido-NAD(+) (ammonia route): step 1/1. Catalyzes the ATP-dependent amidation of deamido-NAD to form NAD. Uses ammonia as a nitrogen source. This Shewanella baltica (strain OS185) protein is NH(3)-dependent NAD(+) synthetase.